Reading from the N-terminus, the 372-residue chain is F-box/kelch-repeat protein At5g49000 (372 aa).

Basic residues predominate over residues 1–11; the sequence is MSSPERKRKKR. A disordered region spans residues 1 to 24; the sequence is MSSPERKRKKRSLEPSPESTPNPS. The F-box domain occupies 19 to 65; the sequence is STPNPSLPDDLIVSILARVSRLYYPILSLVSKSSRTLVTSPELYKTR. 4 Kelch repeats span residues 131 to 177, 179 to 224, 226 to 271, and 273 to 312; these read NIYA…VVDG, IYVA…VIEG, IYIF…LYCY, and PGGI…GGKM.

The sequence is that of F-box/kelch-repeat protein At5g49000 from Arabidopsis thaliana (Mouse-ear cress).